We begin with the raw amino-acid sequence, 516 residues long: Glucose-6-phosphate 1-dehydrogenase 5, cytoplasmic (516 aa).

Residues 38–45, R73, Y156, and K183 contribute to the NADP(+) site; that span reads GASGDLAK. D-glucose 6-phosphate contacts are provided by residues K183, 213-217, E251, and D270; that span reads HYLGK. The active-site Proton acceptor is the H275. Residue K358 coordinates NADP(+). D-glucose 6-phosphate-binding residues include K361 and K366. Residues K367, R371, and R395 each contribute to the NADP(+) site. Q397 contributes to the D-glucose 6-phosphate binding site. NADP(+)-binding positions include 403–405, 423–425, R489, and W511; these read YMK and DLS.

This sequence belongs to the glucose-6-phosphate dehydrogenase family. Forms homodimer. Expressed in leaves and stems.

It is found in the cytoplasm. It localises to the cytosol. It catalyses the reaction D-glucose 6-phosphate + NADP(+) = 6-phospho-D-glucono-1,5-lactone + NADPH + H(+). Its pathway is carbohydrate degradation; pentose phosphate pathway; D-ribulose 5-phosphate from D-glucose 6-phosphate (oxidative stage): step 1/3. With respect to regulation, regulated by metabolites. Its function is as follows. Catalyzes the rate-limiting step of the oxidative pentose-phosphate pathway, which represents a route for the dissimilation of carbohydrates besides glycolysis. The main function of this enzyme is to provide reducing power (NADPH) and pentose phosphates for fatty acid and nucleic acid synthesis which are involved in membrane synthesis and cell division. The polypeptide is Glucose-6-phosphate 1-dehydrogenase 5, cytoplasmic (Arabidopsis thaliana (Mouse-ear cress)).